A 187-amino-acid chain; its full sequence is GTP cyclohydrolase 1 (187 aa).

Zn(2+)-binding residues include Cys81, His84, and Cys152.

It belongs to the GTP cyclohydrolase I family. Homomer.

The enzyme catalyses GTP + H2O = 7,8-dihydroneopterin 3'-triphosphate + formate + H(+). Its pathway is cofactor biosynthesis; 7,8-dihydroneopterin triphosphate biosynthesis; 7,8-dihydroneopterin triphosphate from GTP: step 1/1. The sequence is that of GTP cyclohydrolase 1 from Pyrobaculum neutrophilum (strain DSM 2338 / JCM 9278 / NBRC 100436 / V24Sta) (Thermoproteus neutrophilus).